The following is a 356-amino-acid chain: Dynein regulatory complex protein 10 (356 aa).

Residues 126–167 (SNREFFEEVRDREERAVAEQEQLKQKLKLQRVELQKAAGTIQ) adopt a coiled-coil conformation. The segment at 173-209 (ARGEVSEVQSSTQQSRAAIEGSARAQSEADKSSFQSD) is disordered. A compositionally biased stretch (low complexity) spans 178 to 187 (SEVQSSTQQS). Residues 197–287 (AQSEADKSSF…LRQLQEYNSG (91 aa)) adopt a coiled-coil conformation. Positions 319–348 (QNHAARVIQSYWRGFKKAREAAKKKAKKLE) constitute an IQ domain.

The protein belongs to the DRC10 family. Component of the nexin-dynein regulatory complex (N-DRC).

Its subcellular location is the cytoplasm. It localises to the cytoskeleton. The protein localises to the flagellum axoneme. Component of the nexin-dynein regulatory complex (N-DRC), a key regulator of ciliary/flagellar motility which maintains the alignment and integrity of the distal axoneme and regulates microtubule sliding in motile axonemes. The sequence is that of Dynein regulatory complex protein 10 from Chlamydomonas reinhardtii (Chlamydomonas smithii).